Reading from the N-terminus, the 216-residue chain is 3-keto-L-gulonate-6-phosphate decarboxylase UlaD (216 aa).

Asp-11 contacts substrate. Positions 33 and 62 each coordinate Mg(2+). Arg-192 lines the substrate pocket.

It belongs to the HPS/KGPDC family. KGPDC subfamily. As to quaternary structure, homodimer. Mg(2+) is required as a cofactor.

It carries out the reaction 3-dehydro-L-gulonate 6-phosphate + H(+) = L-xylulose 5-phosphate + CO2. Its pathway is cofactor degradation; L-ascorbate degradation; D-xylulose 5-phosphate from L-ascorbate: step 2/4. Catalyzes the decarboxylation of 3-keto-L-gulonate-6-P into L-xylulose-5-P. Is involved in the anaerobic L-ascorbate utilization. This is 3-keto-L-gulonate-6-phosphate decarboxylase UlaD from Salmonella choleraesuis (strain SC-B67).